The sequence spans 105 residues: ATP synthase subunit c (105 aa).

Transmembrane regions (helical) follow at residues 3-23 (FLSL…GGMG), 32-52 (SILG…IGMG), and 78-98 (VAMA…IIAI).

The protein belongs to the ATPase C chain family. F-type ATPases have 2 components, F(1) - the catalytic core - and F(0) - the membrane proton channel. F(1) has five subunits: alpha(3), beta(3), gamma(1), delta(1), epsilon(1). F(0) has three main subunits: a(1), b(2) and c(10-14). The alpha and beta chains form an alternating ring which encloses part of the gamma chain. F(1) is attached to F(0) by a central stalk formed by the gamma and epsilon chains, while a peripheral stalk is formed by the delta and b chains.

The protein resides in the cell inner membrane. Its function is as follows. F(1)F(0) ATP synthase produces ATP from ADP in the presence of a proton or sodium gradient. F-type ATPases consist of two structural domains, F(1) containing the extramembraneous catalytic core and F(0) containing the membrane proton channel, linked together by a central stalk and a peripheral stalk. During catalysis, ATP synthesis in the catalytic domain of F(1) is coupled via a rotary mechanism of the central stalk subunits to proton translocation. In terms of biological role, key component of the F(0) channel; it plays a direct role in translocation across the membrane. A homomeric c-ring of between 10-14 subunits forms the central stalk rotor element with the F(1) delta and epsilon subunits. The chain is ATP synthase subunit c from Helicobacter pylori (strain Shi470).